The following is a 166-amino-acid chain: NAD(P)H-quinone oxidoreductase subunit I, chloroplastic (166 aa).

2 consecutive 4Fe-4S ferredoxin-type domains span residues 55 to 84 and 95 to 124; these read GRIHFEFDKCIACEVCVRVCPIDLPVVDWK and LNYSIDFGICIFCGNCVEYCPTNCLSMTEE. Residues Cys64, Cys67, Cys70, Cys74, Cys104, Cys107, Cys110, and Cys114 each contribute to the [4Fe-4S] cluster site.

It belongs to the complex I 23 kDa subunit family. As to quaternary structure, NDH is composed of at least 16 different subunits, 5 of which are encoded in the nucleus. [4Fe-4S] cluster serves as cofactor.

The protein resides in the plastid. It localises to the chloroplast thylakoid membrane. The catalysed reaction is a plastoquinone + NADH + (n+1) H(+)(in) = a plastoquinol + NAD(+) + n H(+)(out). The enzyme catalyses a plastoquinone + NADPH + (n+1) H(+)(in) = a plastoquinol + NADP(+) + n H(+)(out). NDH shuttles electrons from NAD(P)H:plastoquinone, via FMN and iron-sulfur (Fe-S) centers, to quinones in the photosynthetic chain and possibly in a chloroplast respiratory chain. The immediate electron acceptor for the enzyme in this species is believed to be plastoquinone. Couples the redox reaction to proton translocation, and thus conserves the redox energy in a proton gradient. The chain is NAD(P)H-quinone oxidoreductase subunit I, chloroplastic from Encelia californica (Bush sunflower).